The chain runs to 1322 residues: FERM and PDZ domain-containing protein 4 (1322 aa).

One can recognise a WW domain in the interval 33 to 66; it reads QVPPYGWEMTANRDGRDYFINHMTQAIPFDDPRL. The PDZ domain occupies 78–155; the sequence is KVEMRRDPVL…SILLTVIQPY (78 aa). The region spanning 204–519 is the FERM domain; the sequence is NVLKVYLENG…GYYRLLVDSR (316 aa). Disordered regions lie at residues 809 to 847, 900 to 927, 952 to 983, 1027 to 1080, 1105 to 1148, 1160 to 1180, and 1207 to 1227; these read APPPGFRDSSDEEDSQSQAASFPEDKEKGSSLQNDEIPV, SPESSSDSGNETNSSEMTESSELATAQK, EFPASKTPAGGLPPKSSHALAARPATDLPPKV, RKSK…STFN, SGLE…GQGD, AKDLDNPEDADSSTCDHPSKL, and HFSLQSSQGSSVDAGCGTGSS. Positions 902–921 are enriched in low complexity; that stretch reads ESSSDSGNETNSSEMTESSE. The span at 1041 to 1054 shows a compositional bias: low complexity; it reads NGNTTGKKQQGTKT. A compositionally biased stretch (polar residues) spans 1067–1080; sequence TVSSRDSQHLSTFN. The segment covering 1207 to 1217 has biased composition (polar residues); sequence HFSLQSSQGSS.

In terms of assembly, interacts (via C-terminus) with DLG1, DLG2, DLG3 and DLG4/PSD95. Interacts (via N-terminus) with ARHGEF7; the interaction is mediated by the PDZ domain. Interacts with GPSM2 (via TPR repeat region).

It localises to the cell projection. The protein localises to the dendritic spine. Positive regulator of dendritic spine morphogenesis and density. Required for the maintenance of excitatory synaptic transmission. Binds phosphatidylinositol 4,5-bisphosphate. The protein is FERM and PDZ domain-containing protein 4 (FRMPD4) of Homo sapiens (Human).